The chain runs to 887 residues: Translation initiation factor IF-2 (887 aa).

Residues 1–291 are disordered; that stretch reads MTDQADTSER…RRRVERERKK (291 aa). Residues 58–117 show a composition bias toward low complexity; it reads AAPAAAPAAAPAAAEEVAKKPVAAPEVKPAAPVEERPAPVAKAAPEVKAVPAPAPAAAPA. Composition is skewed to basic and acidic residues over residues 148-178, 185-194, 201-215, and 267-276; these read SAREREGEDRRRAEEEARRFAEEDARREAER, AAEEASRHTA, RAAEEAKRRLDDDRP, and AFDDESERQR. One can recognise a tr-type G domain in the interval 385 to 553; the sequence is ARAPVVTVMG…TILLQAELLD (169 aa). Residues 394-401 form a G1 region; it reads GHVDHGKT. 394–401 is a GTP binding site; it reads GHVDHGKT. The tract at residues 419–423 is G2; the sequence is GITQH. Residues 441–444 form a G3 region; it reads DTPG. GTP is bound by residues 441-445 and 495-498; these read DTPGH and NKMD. Residues 495–498 form a G4 region; that stretch reads NKMD. Residues 531–533 form a G5 region; the sequence is SAK.

The protein belongs to the TRAFAC class translation factor GTPase superfamily. Classic translation factor GTPase family. IF-2 subfamily.

It is found in the cytoplasm. One of the essential components for the initiation of protein synthesis. Protects formylmethionyl-tRNA from spontaneous hydrolysis and promotes its binding to the 30S ribosomal subunits. Also involved in the hydrolysis of GTP during the formation of the 70S ribosomal complex. This chain is Translation initiation factor IF-2, found in Parvibaculum lavamentivorans (strain DS-1 / DSM 13023 / NCIMB 13966).